The following is a 119-amino-acid chain: Fluoride-specific ion channel FluC 1 (119 aa).

The next 4 helical transmembrane spans lie at 6–26 (VALVAGGGFAGALCRHGIAVV), 31–51 (FPWGTLVVNVAGAFLLGAIVY), 66–86 (VVATGFLSSFTTYSTFAGETI), and 91–111 (RLAALNVVGNYALGFVAVLVA).

Belongs to the fluoride channel Fluc/FEX (TC 1.A.43) family.

Its subcellular location is the cell membrane. The catalysed reaction is fluoride(in) = fluoride(out). In terms of biological role, fluoride-specific ion channel. Important for reducing fluoride concentration in the cell, thus reducing its toxicity. The chain is Fluoride-specific ion channel FluC 1 from Natronomonas pharaonis (strain ATCC 35678 / DSM 2160 / CIP 103997 / JCM 8858 / NBRC 14720 / NCIMB 2260 / Gabara) (Halobacterium pharaonis).